The sequence spans 146 residues: Leghemoglobin 2 (146 aa).

One can recognise a Globin domain in the interval 2–146 (GFTAQQDALV…LAAAIKKAMS (145 aa)). Position 30 is a nitrated tyrosine (Tyr-30). A heme b-binding site is contributed by Ser-45. Ser-45 carries the post-translational modification Phosphoserine. O2 is bound at residue His-61. Residues Lys-64, His-93, and Lys-96 each coordinate heme b. Nitrated tyrosine is present on Tyr-134.

It belongs to the plant globin family. Monomer. Nitrated in effective nodules and particularly in hypoxic conditions; this mechanism may play a protective role in the symbiosis by buffering toxic peroxynitrite NO(2)(-). Nitration level decrease during nodule senescence. In terms of processing, phosphorylation at Ser-45 disrupts the molecular environment of its porphyrin ring oxygen binding pocket, thus leading to a reduced oxygen consumption and to the delivery of oxygen O(2) to symbiosomes. As to expression, specifically and strongly expressed in root nodules and at low levels in seedlings.

The protein resides in the cytoplasm. Its subcellular location is the cytosol. The protein localises to the nucleus. Leghemoglobin that reversibly binds oxygen O(2) through a pentacoordinated heme iron. In root nodules, facilitates the diffusion of oxygen to the bacteroids while preventing the bacterial nitrogenase from being inactivated by buffering dioxygen, nitric oxide and carbon monoxide, and promoting the formation of reactive oxygen species (ROS, e.g. H(2)O(2)). This role is essential for symbiotic nitrogen fixation (SNF). This Lotus japonicus (Lotus corniculatus var. japonicus) protein is Leghemoglobin 2.